Here is a 62-residue protein sequence, read N- to C-terminus: Small EDRK-rich factor 1 (62 aa).

Basic and acidic residues-rich tracts occupy residues Met-1–Ser-30 and Ala-50–Lys-62. A disordered region spans residues Met-1–Lys-62.

Belongs to the SERF family. As to quaternary structure, interacts with SNCA; this interaction promotes the aggregation of SNCA.

The protein resides in the cytoplasm. It localises to the cytosol. It is found in the nucleus. Its function is as follows. Positive regulator of amyloid protein aggregation and proteotoxicity. Induces conformational changes in amyloid proteins, such as APP, HTT, and SNCA, driving them into compact formations preceding the formation of aggregates. In Bos taurus (Bovine), this protein is Small EDRK-rich factor 1 (SERF1).